A 406-amino-acid polypeptide reads, in one-letter code: Tryptophan 2,3-dioxygenase (406 aa).

Substrate is bound by residues 72–76 and R144; that span reads FIVTH. H328 serves as a coordination point for heme. Residue T342 coordinates substrate.

The protein belongs to the tryptophan 2,3-dioxygenase family. In terms of assembly, homotetramer. Dimer of dimers. Heme is required as a cofactor.

It carries out the reaction L-tryptophan + O2 = N-formyl-L-kynurenine. Its pathway is amino-acid degradation; L-tryptophan degradation via kynurenine pathway; L-kynurenine from L-tryptophan: step 1/2. In terms of biological role, heme-dependent dioxygenase that catalyzes the oxidative cleavage of the L-tryptophan (L-Trp) pyrrole ring and converts L-tryptophan to N-formyl-L-kynurenine. Catalyzes the oxidative cleavage of the indole moiety. The chain is Tryptophan 2,3-dioxygenase from Xenopus laevis (African clawed frog).